A 118-amino-acid polypeptide reads, in one-letter code: uncharacterized protein (118 aa).

The protein to M.jannaschii MJ0310 and MJ1340.

This is an uncharacterized protein from Methanocaldococcus jannaschii (strain ATCC 43067 / DSM 2661 / JAL-1 / JCM 10045 / NBRC 100440) (Methanococcus jannaschii).